A 252-amino-acid polypeptide reads, in one-letter code: 3-dehydroquinate dehydratase (252 aa).

3-dehydroquinate contacts are provided by residues 46–48 (EWR) and Arg-82. His-143 acts as the Proton donor/acceptor in catalysis. Lys-170 serves as the catalytic Schiff-base intermediate with substrate. 3-dehydroquinate-binding residues include Arg-212, Ser-231, and Gln-235.

Belongs to the type-I 3-dehydroquinase family. Homodimer.

The catalysed reaction is 3-dehydroquinate = 3-dehydroshikimate + H2O. It functions in the pathway metabolic intermediate biosynthesis; chorismate biosynthesis; chorismate from D-erythrose 4-phosphate and phosphoenolpyruvate: step 3/7. Involved in the third step of the chorismate pathway, which leads to the biosynthesis of aromatic amino acids. Catalyzes the cis-dehydration of 3-dehydroquinate (DHQ) and introduces the first double bond of the aromatic ring to yield 3-dehydroshikimate. The sequence is that of 3-dehydroquinate dehydratase from Listeria welshimeri serovar 6b (strain ATCC 35897 / DSM 20650 / CCUG 15529 / CIP 8149 / NCTC 11857 / SLCC 5334 / V8).